Reading from the N-terminus, the 99-residue chain is MTTYQVRLINKKRAIDITIPVDENTTILDAAEQQDIELPFSCQSGSCSSCVAKVVEGEVDQSEQVFLDEEQMAKGFIVLCVSYPRSDCTIRTHQEPYLV.

Residues Tyr4–Pro96 enclose the 2Fe-2S ferredoxin-type domain. [2Fe-2S] cluster-binding residues include Cys42, Cys47, Cys50, and Cys80.

This sequence belongs to the 2Fe2S plant-type ferredoxin family. [2Fe-2S] cluster serves as cofactor.

In terms of biological role, ferredoxins are iron-sulfur proteins that transfer electrons in a wide variety of metabolic reactions. Donates electrons to the nitrogenase 2. In Trichormus variabilis (strain ATCC 29413 / PCC 7937) (Anabaena variabilis), this protein is Ferredoxin, vegetative (fdxH2).